The primary structure comprises 655 residues: p-hydroxybenzoic acid efflux pump subunit AaeB (655 aa).

Helical transmembrane passes span 13-33 (FAVK…HFQL), 38-58 (WAVL…GGEP), 69-89 (LRII…IAMI), 93-113 (LLMI…SSLV), 121-141 (WGLA…EPLL), 152-172 (EIVI…PRSI), 370-390 (LFWL…IAVV), 407-427 (FIYG…VIIP), 431-451 (QSML…GIEV), 459-479 (MGAL…TFHF), and 482-502 (FLDS…VILL).

It belongs to the aromatic acid exporter ArAE (TC 2.A.85) family.

The protein localises to the cell inner membrane. Functionally, forms an efflux pump with AaeA. Could function as a metabolic relief valve, allowing to eliminate certain compounds when they accumulate to high levels in the cell. The chain is p-hydroxybenzoic acid efflux pump subunit AaeB from Escherichia coli (strain K12 / MC4100 / BW2952).